The sequence spans 913 residues: Epithelial discoidin domain-containing receptor 1 (913 aa).

A signal peptide spans 1–18 (MGPEALSSLLLLLLVASG). The Extracellular segment spans residues 21-417 (DMKGHFDPAK…VAKAEGSPTA (397 aa)). An F5/8 type C domain is found at 31 to 185 (CRYALGMQDR…VCLRVELYGC (155 aa)). 2 disulfide bridges follow: cysteine 31/cysteine 185 and cysteine 74/cysteine 177. The segment at 192–367 (LSYTAPVGQT…LFSEISFISD (176 aa)) is DS-like domain. Positions 211, 230, 233, 235, 253, and 255 each coordinate Ca(2+). Asparagine 211 carries N-linked (GlcNAc...) asparagine glycosylation. Asparagine 260 carries an N-linked (GlcNAc...) asparagine glycan. A disulfide bridge links cysteine 303 with cysteine 348. Ca(2+) is bound by residues serine 360 and glutamate 361. Residues asparagine 370 and asparagine 394 are each glycosylated (N-linked (GlcNAc...) asparagine). The chain crosses the membrane as a helical span at residues 418–438 (ILIGCLVAIILLLLLIIALML). At 439–913 (WRLHWRRLLS…FLAEDALNTV (475 aa)) the chain is on the cytoplasmic side. The interval 470 to 499 (ILINNRPGPREPPPYQEPRPRGNPPHSAPC) is disordered. Residues 479–496 (REPPPYQEPRPRGNPPHS) are compositionally biased toward pro residues. The PPxY motif motif lies at 481–484 (PPPY). 3 positions are modified to phosphotyrosine; by autocatalysis: tyrosine 484, tyrosine 513, and tyrosine 520. The Protein kinase domain occupies 610-905 (LRFKEKLGEG…PPFSQLHRFL (296 aa)). Residue 616-624 (LGEGQFGEV) coordinates ATP. Serine 631 is modified (phosphoserine). Position 655 (lysine 655) interacts with ATP. Position 740 is a phosphotyrosine; by autocatalysis (tyrosine 740). Aspartate 766 functions as the Proton acceptor in the catalytic mechanism. Tyrosine 792, tyrosine 796, and tyrosine 797 each carry phosphotyrosine; by autocatalysis.

Belongs to the protein kinase superfamily. Tyr protein kinase family. Insulin receptor subfamily. Homodimer. Interacts (via PPxY motif) with WWC1 (via WW domains) in a collagen-regulated manner. Forms a tripartite complex with WWC1 and PRKCZ, but predominantly in the absence of collagen. Interacts (tyrosine phosphorylated) with SHC1. Interacts with SRC. Interacts with MYH9. Interacts with CDH1. Interacts with PTPN11. Interacts with NCK2. Autophosphorylated in response to fibrillar collagen binding. Post-translationally, glycosylation of Asn-211, but apparently not of Asn-260 or Asn-394, prevents autophosphorylation from occurring in the absence of collagen. Detected in T-47D, MDA-MB-175 and HBL-100 breast carcinoma cells, A-431 epidermoid carcinoma cells, SW48 and SNU-C2B colon carcinoma cells and Hs 294T melanoma cells (at protein level). Expressed at low levels in most adult tissues and is highest in the brain, lung, placenta and kidney. Lower levels of expression are detected in melanocytes, heart, liver, skeletal muscle and pancreas. Abundant in breast carcinoma cell lines. In the colonic mucosa, expressed in epithelia but not in the connective tissue of the lamina propria. In the thyroid gland, expressed in the epithelium of the thyroid follicles. In pancreas, expressed in the islets of Langerhans cells, but not in the surrounding epithelial cells of the exocrine pancreas. In kidney, expressed in the epithelia of the distal tubules. Not expressed in connective tissue, endothelial cells, adipose tissue, muscle cells or cells of hematopoietic origin.

The protein localises to the cell membrane. It localises to the secreted. The enzyme catalyses L-tyrosyl-[protein] + ATP = O-phospho-L-tyrosyl-[protein] + ADP + H(+). With respect to regulation, inhibited by the multi-targeted cancer drugs imatinib and ponatinib. Functionally, tyrosine kinase that functions as a cell surface receptor for fibrillar collagen and regulates cell attachment to the extracellular matrix, remodeling of the extracellular matrix, cell migration, differentiation, survival and cell proliferation. Collagen binding triggers a signaling pathway that involves SRC and leads to the activation of MAP kinases. Regulates remodeling of the extracellular matrix by up-regulation of the matrix metalloproteinases MMP2, MMP7 and MMP9, and thereby facilitates cell migration and wound healing. Required for normal blastocyst implantation during pregnancy, for normal mammary gland differentiation and normal lactation. Required for normal ear morphology and normal hearing. Promotes smooth muscle cell migration, and thereby contributes to arterial wound healing. Also plays a role in tumor cell invasion. Phosphorylates PTPN11. This Homo sapiens (Human) protein is Epithelial discoidin domain-containing receptor 1 (DDR1).